We begin with the raw amino-acid sequence, 388 residues long: Processive diacylglycerol beta-glucosyltransferase (388 aa).

It belongs to the glycosyltransferase 28 family. UgtP subfamily.

The protein resides in the cell membrane. The catalysed reaction is a 1,2-diacyl-3-O-(beta-D-glucopyranosyl)-sn-glycerol + UDP-alpha-D-glucose = a 1,2-diacyl-3-O-(beta-D-Glc-(1-&gt;6)-beta-D-Glc)-sn-glycerol + UDP + H(+). It carries out the reaction a 1,2-diacyl-3-O-(beta-D-Glc-(1-&gt;6)-beta-D-Glc)-sn-glycerol + UDP-alpha-D-glucose = a 1,2-diacyl-3-O-(beta-D-Glc-(1-&gt;6)-beta-D-Glc-(1-&gt;6)-beta-D-Glc)-sn-glycerol + UDP + H(+). It catalyses the reaction a 1,2-diacyl-sn-glycerol + UDP-alpha-D-glucose = a 1,2-diacyl-3-O-(beta-D-glucopyranosyl)-sn-glycerol + UDP + H(+). Its pathway is glycolipid metabolism; diglucosyl-diacylglycerol biosynthesis. Processive glucosyltransferase involved in the biosynthesis of both the bilayer- and non-bilayer-forming membrane glucolipids. Is able to successively transfer up to three glucosyl residues to diacylglycerol (DAG), thereby catalyzing the formation of beta-monoglucosyl-DAG (3-O-(beta-D-glucopyranosyl)-1,2-diacyl-sn-glycerol), beta-diglucosyl-DAG (3-O-(beta-D-glucopyranosyl-beta-(1-&gt;6)-D-glucopyranosyl)-1,2-diacyl-sn-glycerol) and beta-triglucosyl-DAG (3-O-(beta-D-glucopyranosyl-beta-(1-&gt;6)-D-glucopyranosyl-beta-(1-&gt;6)-D-glucopyranosyl)-1,2-diacyl-sn-glycerol). Beta-diglucosyl-DAG is the predominant glycolipid found in Bacillales and is also used as a membrane anchor for lipoteichoic acid (LTA). The sequence is that of Processive diacylglycerol beta-glucosyltransferase from Bacillus cytotoxicus (strain DSM 22905 / CIP 110041 / 391-98 / NVH 391-98).